The primary structure comprises 151 residues: Deoxyuridine 5'-triphosphate nucleotidohydrolase (151 aa).

Substrate-binding positions include 70-72 (RSG), N83, 87-89 (LID), and M97.

Belongs to the dUTPase family. Mg(2+) is required as a cofactor.

The enzyme catalyses dUTP + H2O = dUMP + diphosphate + H(+). The protein operates within pyrimidine metabolism; dUMP biosynthesis; dUMP from dCTP (dUTP route): step 2/2. In terms of biological role, this enzyme is involved in nucleotide metabolism: it produces dUMP, the immediate precursor of thymidine nucleotides and it decreases the intracellular concentration of dUTP so that uracil cannot be incorporated into DNA. This is Deoxyuridine 5'-triphosphate nucleotidohydrolase from Haemophilus influenzae (strain 86-028NP).